The primary structure comprises 767 residues: Protein NLP3 (767 aa).

3 disordered regions span residues 462-494 (ATPPLTQEDPKGKQVSFSFSSASSLENRKRKTK), 590-622 (INPTQTVHVPPKSPPSSSGSQSSSGSSTCCSSE), and 646-672 (HEDQRPVRVTSSLPPLPSATTPRKAKD). The RWP-RK domain occupies 482-566 (SASSLENRKR…MDSVEGVQGS (85 aa)). The stretch at 485–506 (SLENRKRKTKAEKDITLDTLRQ) forms a coiled coil. Composition is skewed to low complexity over residues 604–622 (PSSSGSQSSSGSSTCCSSE) and 655–667 (TSSLPPLPSATTP). Residues 673-759 (GMKVKAMFGD…ETIRILVHHP (87 aa)) enclose the PB1 domain.

It localises to the nucleus. Its function is as follows. Probable transcription factor. In Arabidopsis thaliana (Mouse-ear cress), this protein is Protein NLP3 (NLP3).